A 610-amino-acid chain; its full sequence is Chitinase 63 (610 aa).

The signal sequence occupies residues 1-30 (MRFRHKAAALAATLALPLAGLVGLASPAQA). The region spanning 31 to 134 (ATSATATFQK…KINGGSCDGS (104 aa)) is the CBM2 domain. 2 disordered regions span residues 125-153 (KINGGSCDGSSVPGDEAPSAPGTPTASNI) and 208-239 (ARDTGDQTGPASGSVKVTTTGGDGGEPNPNPG). The 86-residue stretch at 144–229 (APGTPTASNI…GSVKVTTTGG (86 aa)) folds into the Fibronectin type-III domain. Over residues 213–224 (DQTGPASGSVKV) the composition is skewed to polar residues. One can recognise a GH18 domain in the interval 241-610 (EVKMGYFTNW…LVSAIDSGLK (370 aa)). Residues 313 to 314 (DQ) and 340 to 343 (GGWT) contribute to the chitin site. The active-site Proton donor is glutamate 383. Residues tyrosine 384, 450–453 (MTYD), and tryptophan 590 contribute to the chitin site.

The protein belongs to the glycosyl hydrolase 18 family. Chitinase class II subfamily.

It carries out the reaction Random endo-hydrolysis of N-acetyl-beta-D-glucosaminide (1-&gt;4)-beta-linkages in chitin and chitodextrins.. The chain is Chitinase 63 (chtA) from Streptomyces plicatus.